A 184-amino-acid polypeptide reads, in one-letter code: Ribosome-recycling factor (184 aa).

The tract at residues 141 to 164 (DEKNGDITEDDLRSQTEDVQKATD) is disordered.

Belongs to the RRF family.

The protein resides in the cytoplasm. Its function is as follows. Responsible for the release of ribosomes from messenger RNA at the termination of protein biosynthesis. May increase the efficiency of translation by recycling ribosomes from one round of translation to another. This Staphylococcus haemolyticus (strain JCSC1435) protein is Ribosome-recycling factor.